We begin with the raw amino-acid sequence, 386 residues long: Glycerate dehydrogenase HPR, peroxisomal (386 aa).

Residues 175–176 (RI), 271–273 (CSR), and Asp297 each bind NAD(+). Arg273 is a catalytic residue. Glu302 is an active-site residue. His320 functions as the Proton donor in the catalytic mechanism. 320–323 (HIAS) provides a ligand contact to NAD(+). Residues 384–386 (SKL) carry the Microbody targeting signal motif.

Belongs to the D-isomer specific 2-hydroxyacid dehydrogenase family. As to expression, present in leaves (at protein level). Mostly expressed in photosynthetic tissues such as leaves, stems, flowers, buds, and, to a lower extent, in siliques and roots.

The protein resides in the peroxisome. The catalysed reaction is (R)-glycerate + NAD(+) = 3-hydroxypyruvate + NADH + H(+). Its pathway is photosynthesis; photorespiration; 3-phospho-D-glycerate from glycine: step 3/4. Its activity is regulated as follows. Slightly inhibited by oxalate. Its function is as follows. Catalyzes the NADH-dependent reduction of hydroxypyruvate into glycerate in the photorespiratory core cycle. Mediates fatty acid beta-oxidation in germinating seeds when malate dehydrogenase is absent. This chain is Glycerate dehydrogenase HPR, peroxisomal (HPR), found in Arabidopsis thaliana (Mouse-ear cress).